The primary structure comprises 391 residues: Ferrochelatase (391 aa).

Residues H196 and E281 each coordinate Fe cation.

The protein belongs to the ferrochelatase family.

The protein localises to the cytoplasm. It catalyses the reaction heme b + 2 H(+) = protoporphyrin IX + Fe(2+). It participates in porphyrin-containing compound metabolism; protoheme biosynthesis; protoheme from protoporphyrin-IX: step 1/1. Catalyzes the ferrous insertion into protoporphyrin IX. In Prochlorococcus marinus subsp. pastoris (strain CCMP1986 / NIES-2087 / MED4), this protein is Ferrochelatase.